A 229-amino-acid polypeptide reads, in one-letter code: Non-structural protein P8 (229 aa).

Residues lysine 13 to aspartate 31 show a composition bias toward basic and acidic residues. Positions lysine 13–proline 46 are disordered. The segment covering proline 36 to proline 46 has biased composition (low complexity). The next 2 membrane-spanning stretches (helical) occupy residues isoleucine 119–leucine 139 and serine 162–alanine 182.

The protein belongs to the orbivirus NS3 family. In terms of assembly, forms homooligomers via coiled-coil motif. Interacts with host OPTN; this interaction inhibits innate immune response.

It localises to the host cell membrane. The protein localises to the host Golgi apparatus. Plays a role in the inhibition of host innate immune response. Interacts with host OPTN and thus inhibits the recruitment of TBK1 to the host Golgi apparatus. In turn, downstream partner IRF3 cannot be activated and IFN-beta production is impaired. Its function is as follows. Facilitates viral particle release either by increasing plasma membrane permeability through a viroporin-like activity or by viral budding. The chain is Non-structural protein P8 (Segment-10) from Antilocapra americana (Pronghorn).